The chain runs to 449 residues: MALTVKEEEFSNTLIKNASAFDRLKLGNLKNLKIQKKLQFLYLILFVLITGVFFFFLIGNFYSHRKLYQVIKNTKHTTIGFKIDRPHDKVLSSVLKNKLSTYVKESFKFFKSGYAQKGYLGSENDSIELDDVANLMFYGEGQIGTNKQPFMFIFDTGSANLWVPSVNCDSIGCSTKHLYDASASKSYEKDGTKVEISYGSGTVRGYFSKDVISLGDLSLPYKFIEVTDADDLEPIYSGSEFDGILGLGWKDLSIGSIDPVVVELKKQNKIDNALFTFYLPVHDKHVGYLTIGGIESDFYEGPLTYEKLNHDLYWQIDLDIHFGKYVMQKANAVVDSGTSTITAPTSFLNKFFRDMNVIKVPFLPLYVTTCDNDDLPTLEFHSRNNKYTLEPEFYMDPLSDIDPALCMLYILPVDIDDNTFILGDPFMRKYFTVFDYEKESVGFAVAKNL.

Residues M1–K37 are Cytoplasmic-facing. The propeptide occupies M1–G121. Residues L38–I58 form a helical; Signal-anchor for type II membrane protein membrane-spanning segment. At G59–L449 the chain is on the lumenal side. Positions F137–A444 constitute a Peptidase A1 domain. Residue D155 is part of the active site. A disulfide bridge links C168 with C173. The active site involves D335. C370 and C406 are disulfide-bonded.

This sequence belongs to the peptidase A1 family. Component of the hemozoin formation complex (HFC) composed of falcipains FP2A and/or FP2B, plasmepsins PMII, PMIII/HAP and PMIV, heme detoxifying protein HDP and falcilysin FLN. The HFC complex is involved in hemoglobin degradation and detoxification of heme in the food vacuole during the asexual blood stage. Proteolytically cleaved into the soluble active mature form by cysteine proteases in the digestive vacuole of trophozoites. Proteolysis requires an acidic environment. Autoprocessing or transprocessing by other plasmepsins such as PMII may serve as an alternate activation system.

It localises to the membrane. Its subcellular location is the vacuole lumen. The catalysed reaction is Hydrolysis of the bonds linking certain hydrophobic residues in hemoglobin or globin. Also cleaves small molecules substrates such as Ala-Leu-Glu-Arg-Thr-Phe-|-Phe(NO2)-Ser-Phe-Pro-Thr.. With respect to regulation, inhibited by KNI derived compounds KNI-10333 and to a lesser extent KNI-10743. Its function is as follows. During the asexual blood stage, catalyzes the cleavage of denatured host hemoglobin (Hb). Digestion of host Hb is an essential step which provides the parasite with amino acids for protein synthesis, and regulates osmolarity. The protein is Plasmepsin IV of Plasmodium falciparum (isolate 3D7).